The primary structure comprises 92 residues: MTRSLKKNPFVAKHLLRKIEKLNTKAEKEIIRTWSRASTIIPTMIGHTIAIHNGREHLPVYIIDLMVGHKLGEFSPTINFRGHAKNDNRSRR.

This sequence belongs to the universal ribosomal protein uS19 family.

Its subcellular location is the plastid. The protein localises to the chloroplast. In terms of biological role, protein S19 forms a complex with S13 that binds strongly to the 16S ribosomal RNA. The polypeptide is Small ribosomal subunit protein uS19c (Lobularia maritima (Sweet alyssum)).